Consider the following 22-residue polypeptide: Phospholipase A2 (22 aa).

This sequence belongs to the phospholipase A2 family. It depends on Ca(2+) as a cofactor.

It localises to the secreted. The catalysed reaction is a 1,2-diacyl-sn-glycero-3-phosphocholine + H2O = a 1-acyl-sn-glycero-3-phosphocholine + a fatty acid + H(+). PA2 catalyzes the calcium-dependent hydrolysis of the 2-acyl groups in 3-sn-phosphoglycerides. The sequence is that of Phospholipase A2 from Struthio camelus (Common ostrich).